Consider the following 585-residue polypeptide: Arginine--tRNA ligase (585 aa).

The 'HIGH' region motif lies at 127 to 137; sequence PNTNKPLHVGH.

Belongs to the class-I aminoacyl-tRNA synthetase family. In terms of assembly, monomer.

Its subcellular location is the cytoplasm. The catalysed reaction is tRNA(Arg) + L-arginine + ATP = L-arginyl-tRNA(Arg) + AMP + diphosphate. The protein is Arginine--tRNA ligase of Borrelia garinii subsp. bavariensis (strain ATCC BAA-2496 / DSM 23469 / PBi) (Borreliella bavariensis).